A 190-amino-acid chain; its full sequence is Adenylate kinase (190 aa).

Position 12 to 17 (12 to 17 (GSGKTT)) interacts with ATP. The tract at residues 34-63 (STGELLRAEVASGSERGKIIEGFTSKGNLV) is NMP. AMP-binding positions include Thr-35, Arg-40, 61 to 63 (NLV), 88 to 91 (GYPR), and Gln-95. The LID stretch occupies residues 130 to 136 (GRARGAD). Arg-131 provides a ligand contact to ATP. Arg-133 and Arg-145 together coordinate AMP. ATP is bound at residue Arg-173.

It belongs to the adenylate kinase family. In terms of assembly, monomer.

It is found in the cytoplasm. The enzyme catalyses AMP + ATP = 2 ADP. The protein operates within purine metabolism; AMP biosynthesis via salvage pathway; AMP from ADP: step 1/1. Catalyzes the reversible transfer of the terminal phosphate group between ATP and AMP. Plays an important role in cellular energy homeostasis and in adenine nucleotide metabolism. This is Adenylate kinase from Wolinella succinogenes (strain ATCC 29543 / DSM 1740 / CCUG 13145 / JCM 31913 / LMG 7466 / NCTC 11488 / FDC 602W) (Vibrio succinogenes).